Here is a 1347-residue protein sequence, read N- to C-terminus: Probable serine/threonine-protein kinase DDB_G0288147 (1347 aa).

The Phorbol-ester/DAG-type zinc finger occupies 12–67 (NHRFEPYTLKHLTICKRCEKEIIGVSNSAQICYSCKNIYHTRCCKEIETKKLELIC). Disordered regions lie at residues 262-316 (PFNE…LNES), 333-402 (SNNS…KSSK), and 463-485 (DNNNNNNNNNNNNNNNSNNNNNN). Residues 271 to 282 (DSTLSASTYNRR) show a composition bias toward polar residues. Composition is skewed to low complexity over residues 286 to 316 (KNKNSNKNNTSSSSSAPASASSSKHSNLNES), 333 to 342 (SNNSNNLAAL), and 350 to 361 (TTTTTTTTTTTT). 2 stretches are compositionally biased toward basic residues: residues 366 to 382 (NNHHHHQHHHQNSKSRK) and 389 to 402 (NKKKIKSPKNKSSK). Positions 464 to 485 (NNNNNNNNNNNNNNNSNNNNNN) are enriched in low complexity. The Protein kinase domain occupies 599–854 (VKINVEIYDS…EILKVFYSLL (256 aa)). ATP contacts are provided by residues 605-613 (IYDSPLCTV) and Lys626. The active-site Proton acceptor is Asp724. Disordered regions lie at residues 937–1241 (SERK…IVNP) and 1282–1310 (SSDSSNSLSDPESEEYSMPIKRSSSIRSP). Positions 976–986 (IIDDDDDDDDD) are enriched in acidic residues. Composition is skewed to low complexity over residues 1004–1015 (NINSENKNNNNV) and 1024–1062 (SSNSNNNNNNNNNNNNNNNNNNNNNNNNNNSNNNNNNNN). 2 stretches are compositionally biased toward polar residues: residues 1063–1083 (LRQNQFLGNDLNKSQDNNQLM) and 1118–1127 (LSSSQTSEIG). 2 stretches are compositionally biased toward low complexity: residues 1128–1241 (DNNT…IVNP) and 1282–1291 (SSDSSNSLSD).

Belongs to the protein kinase superfamily. TKL Ser/Thr protein kinase family.

It catalyses the reaction L-seryl-[protein] + ATP = O-phospho-L-seryl-[protein] + ADP + H(+). It carries out the reaction L-threonyl-[protein] + ATP = O-phospho-L-threonyl-[protein] + ADP + H(+). The sequence is that of Probable serine/threonine-protein kinase DDB_G0288147 from Dictyostelium discoideum (Social amoeba).